The chain runs to 681 residues: Serine/threonine-protein kinase PAK 6 (681 aa).

Disordered regions lie at residues M1 to E30, Q200 to L256, and T268 to W355. Positions I12 to S25 constitute a CRIB domain. A linker region spans residues F26–L406. Composition is skewed to low complexity over residues S201 to T212 and T268 to K278. Polar residues predominate over residues S308–L333. In terms of domain architecture, Protein kinase spans L407–L658. ATP is bound by residues I413–V421 and K436. D526 acts as the Proton acceptor in catalysis. S560 carries the phosphoserine; by autocatalysis modification.

The protein belongs to the protein kinase superfamily. STE Ser/Thr protein kinase family. STE20 subfamily. In terms of assembly, interacts tightly with GTP-bound but not GDP-bound CDC42/p21 and RAC1. Interacts with the androgen receptor AR. Interacts with IQGAP1 and PPM1B. Post-translationally, autophosphorylated. Phosphorylated by MAP2K6/MAPKK6, leading to PAK6 activation.

It localises to the cytoplasm. The protein localises to the nucleus. It catalyses the reaction L-seryl-[protein] + ATP = O-phospho-L-seryl-[protein] + ADP + H(+). The enzyme catalyses L-threonyl-[protein] + ATP = O-phospho-L-threonyl-[protein] + ADP + H(+). Serine/threonine protein kinase that plays a role in the regulation of gene transcription. The kinase activity is induced by various effectors including AR or MAP2K6/MAPKK6. Phosphorylates the DNA-binding domain of androgen receptor/AR and thereby inhibits AR-mediated transcription. Also inhibits ESR1-mediated transcription. May play a role in cytoskeleton regulation by interacting with IQGAP1. May protect cells from apoptosis through phosphorylation of BAD. The sequence is that of Serine/threonine-protein kinase PAK 6 (PAK6) from Pongo abelii (Sumatran orangutan).